The chain runs to 155 residues: Small ribosomal subunit protein uS7cz/uS7cy (155 aa).

Belongs to the universal ribosomal protein uS7 family. Part of the 30S ribosomal subunit.

It is found in the plastid. The protein resides in the chloroplast. Its function is as follows. One of the primary rRNA binding proteins, it binds directly to 16S rRNA where it nucleates assembly of the head domain of the 30S subunit. In Angiopteris evecta (Mule's foot fern), this protein is Small ribosomal subunit protein uS7cz/uS7cy (rps7-A).